A 157-amino-acid polypeptide reads, in one-letter code: MNFTHINEQGYARMVDVSSKNDSERIAIAQAIVKMQPETMGKIRDGAIKKGDVLGVAQIAGIMGAKQTSALIPMCHPLNLTSVNLEFAFDEVNASIIIEAEVKTTGKTGVEMEAITAVSVAALTIYDMSKAVDRWMEITDIKLLEKSGGKSGHLVRD.

Residues 74-76 (MCH) and 112-113 (ME) contribute to the substrate site. D127 is a catalytic residue.

The protein belongs to the MoaC family. As to quaternary structure, homohexamer; trimer of dimers.

The catalysed reaction is (8S)-3',8-cyclo-7,8-dihydroguanosine 5'-triphosphate = cyclic pyranopterin phosphate + diphosphate. Its pathway is cofactor biosynthesis; molybdopterin biosynthesis. Catalyzes the conversion of (8S)-3',8-cyclo-7,8-dihydroguanosine 5'-triphosphate to cyclic pyranopterin monophosphate (cPMP). This Syntrophomonas wolfei subsp. wolfei (strain DSM 2245B / Goettingen) protein is Cyclic pyranopterin monophosphate synthase.